The following is a 326-amino-acid chain: Eukaryotic translation initiation factor 3 subunit I (326 aa).

WD repeat units lie at residues 8–47, 50–89, 145–184, 188–227, and 285–326; these read GHER…RLGT, GHQG…VIAS, MVES…KVVD, DHAA…CLKT, and GHFG…NIFE.

The protein belongs to the eIF-3 subunit I family. In terms of assembly, component of the eukaryotic translation initiation factor 3 (eIF-3) complex. The eIF-3 complex interacts with pix.

Its subcellular location is the cytoplasm. Functionally, component of the eukaryotic translation initiation factor 3 (eIF-3) complex, which is involved in protein synthesis of a specialized repertoire of mRNAs and, together with other initiation factors, stimulates binding of mRNA and methionyl-tRNAi to the 40S ribosome. The eIF-3 complex specifically targets and initiates translation of a subset of mRNAs involved in cell proliferation. This Drosophila grimshawi (Hawaiian fruit fly) protein is Eukaryotic translation initiation factor 3 subunit I.